We begin with the raw amino-acid sequence, 156 residues long: tRNA (cytidine(34)-2'-O)-methyltransferase (156 aa).

Residues Gly-102, Leu-124, and Ser-132 each coordinate S-adenosyl-L-methionine.

The protein belongs to the class IV-like SAM-binding methyltransferase superfamily. RNA methyltransferase TrmH family. TrmL subfamily. As to quaternary structure, homodimer.

It is found in the cytoplasm. The enzyme catalyses cytidine(34) in tRNA + S-adenosyl-L-methionine = 2'-O-methylcytidine(34) in tRNA + S-adenosyl-L-homocysteine + H(+). The catalysed reaction is 5-carboxymethylaminomethyluridine(34) in tRNA(Leu) + S-adenosyl-L-methionine = 5-carboxymethylaminomethyl-2'-O-methyluridine(34) in tRNA(Leu) + S-adenosyl-L-homocysteine + H(+). Its function is as follows. Methylates the ribose at the nucleotide 34 wobble position in the two leucyl isoacceptors tRNA(Leu)(CmAA) and tRNA(Leu)(cmnm5UmAA). Catalyzes the methyl transfer from S-adenosyl-L-methionine to the 2'-OH of the wobble nucleotide. In Burkholderia cenocepacia (strain HI2424), this protein is tRNA (cytidine(34)-2'-O)-methyltransferase.